A 282-amino-acid polypeptide reads, in one-letter code: Bis(5'-nucleosyl)-tetraphosphatase, symmetrical (282 aa).

It belongs to the Ap4A hydrolase family.

It catalyses the reaction P(1),P(4)-bis(5'-adenosyl) tetraphosphate + H2O = 2 ADP + 2 H(+). Functionally, hydrolyzes diadenosine 5',5'''-P1,P4-tetraphosphate to yield ADP. This Citrobacter koseri (strain ATCC BAA-895 / CDC 4225-83 / SGSC4696) protein is Bis(5'-nucleosyl)-tetraphosphatase, symmetrical.